The sequence spans 222 residues: uncharacterized protein (222 aa).

The stretch at 43–73 (SQNEEFEYEMERMLSILNEQTMDLTQLQSRI) forms a coiled coil.

This is an uncharacterized protein from Rickettsia conorii (strain ATCC VR-613 / Malish 7).